A 398-amino-acid chain; its full sequence is Enolase (398 aa).

Position 154 (Q154) interacts with (2R)-2-phosphoglycerate. E196 serves as the catalytic Proton donor. The Mg(2+) site is built by D232, E273, and D300. (2R)-2-phosphoglycerate contacts are provided by K325, R354, S355, and K376. The active-site Proton acceptor is K325.

This sequence belongs to the enolase family. Requires Mg(2+) as cofactor.

It localises to the cytoplasm. The protein localises to the secreted. Its subcellular location is the cell surface. It carries out the reaction (2R)-2-phosphoglycerate = phosphoenolpyruvate + H2O. Its pathway is carbohydrate degradation; glycolysis; pyruvate from D-glyceraldehyde 3-phosphate: step 4/5. Functionally, catalyzes the reversible conversion of 2-phosphoglycerate (2-PG) into phosphoenolpyruvate (PEP). It is essential for the degradation of carbohydrates via glycolysis. This Natronomonas pharaonis (strain ATCC 35678 / DSM 2160 / CIP 103997 / JCM 8858 / NBRC 14720 / NCIMB 2260 / Gabara) (Halobacterium pharaonis) protein is Enolase.